The primary structure comprises 333 residues: Anthranilate phosphoribosyltransferase (333 aa).

Residues Gly81, 84–85 (GD), Thr89, 91–94 (NIST), 109–117 (KHGNRSVSS), and Ala121 each bind 5-phospho-alpha-D-ribose 1-diphosphate. An anthranilate-binding site is contributed by Gly81. Ser93 contacts Mg(2+). Asn112 contributes to the anthranilate binding site. Position 167 (Arg167) interacts with anthranilate. Mg(2+)-binding residues include Asp225 and Glu226.

The protein belongs to the anthranilate phosphoribosyltransferase family. Homodimer. Mg(2+) serves as cofactor.

It catalyses the reaction N-(5-phospho-beta-D-ribosyl)anthranilate + diphosphate = 5-phospho-alpha-D-ribose 1-diphosphate + anthranilate. It functions in the pathway amino-acid biosynthesis; L-tryptophan biosynthesis; L-tryptophan from chorismate: step 2/5. Catalyzes the transfer of the phosphoribosyl group of 5-phosphorylribose-1-pyrophosphate (PRPP) to anthranilate to yield N-(5'-phosphoribosyl)-anthranilate (PRA). This Haemophilus influenzae (strain 86-028NP) protein is Anthranilate phosphoribosyltransferase.